The chain runs to 476 residues: MEIPHKATVLVIGGGPGGSYTASALAREGIDIVLLEADVFPRFIDLDETFVNYGFVRKNASHGSLADTDFILQPGADTFAWNVVRSECDDLMFKHASNSGARAFDGVKVTAIEFDPLDESAIDDHPGRPVSASWKAKDGRTGSISFDYLVDASGRAGIASTKYLKSRTYNSYLKNVASWGYWRGATPYGVGTSVEGQPYFEALQDGSGWVWFIPLHNGTTSVGVVMNQELATQKKKSSTVTSSRAFYLESVEGARVISQLLQPANLDGEIKQASDWSYNASSYGSPYLRIVGDAGAFIDPYFSSGVHLAVSGGLSAAVSIAASIRGDCPEHTAWQWHSQGVANRYGRFLLVVLGATKQIRARDSPVLNSEGQDGFDDAFAVIRPVIQGTADVQGKVSAREVLDAVTFSTNAVRPSAGGQNVVLEESSRSLRSQVEQEMGDVANSLAKAYKDTDVYEGLMARLERGSLGLKAVGVMG.

2 residues coordinate FAD: Gly-14 and Gly-17. Residues Ser-304 and Gly-305 each coordinate chloride. Val-306 lines the FAD pocket.

This sequence belongs to the flavin-dependent halogenase family.

It catalyses the reaction ochratoxin B + FADH2 + chloride + O2 = ochratoxin A + FAD + 2 H2O. It functions in the pathway mycotoxin biosynthesis. Flavin-dependent halogenase; part of the gene cluster that mediates the biosynthesis of ochratoxin A (OTA), a mycotoxin composed of a chlorinated type I polyketide dihydroisocoumarin moiety linked to L-phenylalanine, and demonstrated to have nephrotoxic, immunotoxic, genotoxic, neurotoxic, and teratogenic properties. OtaD chlorinates ochratoxin B (OTB) at the C-5 position to form OTA. The pathway begins with the highly reducing polyketide synthase otaA that catalyzes the formation of the isocoumarin group during the initial stages of biosynthesis, starting from one acetate and 4 malonate units, to originate the characteristic pentaketide skeleton 7-methylmellein (7-MM) of the OTA molecule. The newly identified cyclase otaY might be involved in the polyketide cyclization reaction during the initial steps of the OTA biosynthesis. 7-MM is then oxidized into 7-carboxymellein (also called ochratoxin beta) by the cytochrome P450 monooxygenase otaC. The NRPS encoded by the otaB gene is involved in the linking of phenylalanine to the dihydroisocoumarin ring. The reaction catalyzed by NRPS results in the production of ochratoxin B (OTB), which is the non-chlorinated analog of OTA and which subsequently serves as the substrate of the halogenase otaD for chlorination activity to form the final molecular structure of OTA, containing a chlorine atom in the C-5 position of the molecule. The sequence is that of Flavin-dependent halogenase otaD from Aspergillus niger (strain ATCC MYA-4892 / CBS 513.88 / FGSC A1513).